Here is a 1266-residue protein sequence, read N- to C-terminus: Neuronal-glial cell adhesion molecule (1266 aa).

An N-terminal signal peptide occupies residues 1 to 20 (MALPMVGLLLLLLLGGPGAA). The Extracellular portion of the chain corresponds to 21 to 1130 (ITIPPEYGAH…PQPGGGVCTK (1110 aa)). Ig-like C2-type domains lie at 36-128 (PELT…NVIA), 135-221 (PKEK…KEPL), 236-322 (PRLL…HSVT), 327-413 (PYWV…AFLH), 418-506 (PLRM…ALLE), and 510-597 (PTRI…AQLR). Cystine bridges form between cysteine 58–cysteine 110, cysteine 154–cysteine 205, cysteine 260–cysteine 306, and cysteine 348–cysteine 397. N-linked (GlcNAc...) asparagine glycosylation occurs at asparagine 97. Residues asparagine 288, asparagine 390, asparagine 434, asparagine 472, and asparagine 498 are each glycosylated (N-linked (GlcNAc...) asparagine). Cysteine 441 and cysteine 490 are joined by a disulfide. The cysteines at positions 532 and 581 are disulfide-linked. 5 Fibronectin type-III domains span residues 603–698 (PSRD…TPPA), 700–804 (PERN…SGED), 809–930 (YPEN…TPEG), 934–1021 (PPEE…TKPE), and 1022–1118 (PPSP…TNGT). Positions 685–710 (EHHAPSAPIETPPAAPERNPGGVHGE) are disordered. Asparagine 712 and asparagine 819 each carry an N-linked (GlcNAc...) asparagine glycan. A disordered region spans residues 857–882 (SRRQAPPDPPQIPQSPAEDPPPFPPV). The span at 862 to 881 (PPDPPQIPQSPAEDPPPFPP) shows a compositional bias: pro residues. The Cell attachment site motif lies at 914–916 (RGD). The interval 1004-1025 (STPRERPALQTVGSTKPEPPSP) is disordered. N-linked (GlcNAc...) asparagine glycans are attached at residues asparagine 1061, asparagine 1075, asparagine 1100, and asparagine 1116. A helical membrane pass occupies residues 1131 to 1153 (GWFIGFVSSVVLLLLILLILCFI). Residues 1154-1266 (KRSKGGKYSV…ASPCAGPPLD (113 aa)) are Cytoplasmic-facing. Basic and acidic residues predominate over residues 1163–1195 (VKDKEDTQVDSEARPMKDETFGEYRSLESEAEK). Positions 1163–1266 (VKDKEDTQVD…ASPCAGPPLD (104 aa)) are disordered. The segment covering 1199 to 1211 (SGSGAGSGVGSPG) has biased composition (gly residues).

The protein belongs to the immunoglobulin superfamily. L1/neurofascin/NgCAM family. As to quaternary structure, binds to itself and to axonin 1. In terms of tissue distribution, brain.

The protein localises to the cell membrane. Its function is as follows. Mediates the adhesion of neurons to neurons and neurons to glia. It is involved in neuronal migration, neurite fasciculation and outgrowth. This is Neuronal-glial cell adhesion molecule from Gallus gallus (Chicken).